Here is a 504-residue protein sequence, read N- to C-terminus: Anaerobic nitric oxide reductase transcription regulator NorR (504 aa).

4-aspartylphosphate is present on D57. The Sigma-54 factor interaction domain maps to 187–416 (MIGLSPGMTQ…LEHAIHRAVV (230 aa)). Residues 215 to 222 (GETGTGKE) and 278 to 287 (ADNGTLFLDE) contribute to the ATP site. Residues 479 to 498 (WAACARMLETDVANLHRLAK) constitute a DNA-binding region (H-T-H motif).

Its pathway is nitrogen metabolism; nitric oxide reduction. Functionally, required for the expression of anaerobic nitric oxide (NO) reductase, acts as a transcriptional activator for at least the norVW operon. Activation also requires sigma-54. The protein is Anaerobic nitric oxide reductase transcription regulator NorR of Escherichia coli O139:H28 (strain E24377A / ETEC).